The primary structure comprises 112 residues: UPF0060 membrane protein SCO3297 (112 aa).

The next 4 helical transmembrane spans lie at alanine 8 to valine 28, glycine 33 to phenylalanine 53, isoleucine 62 to aspartate 82, and arginine 88 to proline 108.

Belongs to the UPF0060 family.

Its subcellular location is the cell membrane. This chain is UPF0060 membrane protein SCO3297, found in Streptomyces coelicolor (strain ATCC BAA-471 / A3(2) / M145).